Consider the following 71-residue polypeptide: Small ribosomal subunit protein bS21 (71 aa).

Positions 39–71 (EKPTTVRKRAKAAAQKRHAKKLARENARRVRLY) are disordered. The span at 43 to 59 (TVRKRAKAAAQKRHAKK) shows a compositional bias: basic residues. Over residues 60–71 (LARENARRVRLY) the composition is skewed to basic and acidic residues.

This sequence belongs to the bacterial ribosomal protein bS21 family.

In Vibrio atlanticus (strain LGP32) (Vibrio splendidus (strain Mel32)), this protein is Small ribosomal subunit protein bS21.